The primary structure comprises 611 residues: UvrABC system protein C (611 aa).

A GIY-YIG domain is found at 14–91; sequence TSPGCYIHKD…IKENKPKYNI (78 aa). One can recognise a UVR domain in the interval 196–231; sequence DQIIEDLRGKMAGAAQTMEFEKAAEYRDLIQSIGTL.

The protein belongs to the UvrC family. In terms of assembly, interacts with UvrB in an incision complex.

Its subcellular location is the cytoplasm. Its function is as follows. The UvrABC repair system catalyzes the recognition and processing of DNA lesions. UvrC both incises the 5' and 3' sides of the lesion. The N-terminal half is responsible for the 3' incision and the C-terminal half is responsible for the 5' incision. This Streptococcus gordonii (strain Challis / ATCC 35105 / BCRC 15272 / CH1 / DL1 / V288) protein is UvrABC system protein C.